The following is a 349-amino-acid chain: Putative transport protein YhhT (349 aa).

Residues 1–10 (METPQPDKTG) are Cytoplasmic-facing. Residues 11–31 (MHILLKLASLVVILAGIHAAA) traverse the membrane as a helical segment. A topological domain (periplasmic) is located at residue Asp-32. Residues 33-53 (IIVQLLLALFFAIVLNPLVTW) form a helical membrane-spanning segment. At 54-62 (FIRRGVQRP) the chain is on the cytoplasmic side. Residues 63–83 (VAITIVVVVMLIALTALVGVL) traverse the membrane as a helical segment. Over 84-142 (AASFNEFISMLPKFNKELTRKLFKLQEMLPFLNLHMSPERMLQRMDSEKVVTFTTALMT) the chain is Periplasmic. A helical membrane pass occupies residues 143–163 (GLSGAMASVLLLVMTVVFMLF). At 164–208 (EVRHVPYKMRFALNNPQIHIAGLHRALKGVSHYLALKTLLSLWTG) the chain is on the cytoplasmic side. The helical transmembrane segment at 209–229 (VIVWLGLELMGVQFALMWAVL) threads the bilayer. Over 230–234 (AFLLN) the chain is Periplasmic. A helical membrane pass occupies residues 235–255 (YVPNIGAVISAVPPMIQVLLF). The Cytoplasmic portion of the chain corresponds to 256–257 (NG). Residues 258–278 (VYECILVGALFLVVHMVIGNI) form a helical membrane-spanning segment. Over 279–292 (LEPRMMGHRLGMST) the chain is Periplasmic. A helical membrane pass occupies residues 293–313 (MVVFLSLLIWGWLLGPVGMLL). The Cytoplasmic segment spans residues 314–349 (SVPLTSVCKIWMETTKGGSKLAILLGPGRPKSRLPG).

It belongs to the autoinducer-2 exporter (AI-2E) (TC 2.A.86) family.

It is found in the cell inner membrane. This is Putative transport protein YhhT (yhhT) from Escherichia coli O157:H7.